Here is a 429-residue protein sequence, read N- to C-terminus: Aspartate--tRNA(Asp/Asn) ligase (429 aa).

E167 is a binding site for L-aspartate. The aspartate stretch occupies residues 189 to 192 (QLYK). R210 contacts L-aspartate. Residues 210–212 (RAE) and E352 each bind ATP. Mg(2+) is bound by residues E352 and S355. Residues S355 and R359 each contribute to the L-aspartate site. 400–403 (GLAR) is a binding site for ATP.

The protein belongs to the class-II aminoacyl-tRNA synthetase family. Type 2 subfamily. In terms of assembly, homodimer. Requires Mg(2+) as cofactor.

It localises to the cytoplasm. The catalysed reaction is tRNA(Asx) + L-aspartate + ATP = L-aspartyl-tRNA(Asx) + AMP + diphosphate. In terms of biological role, aspartyl-tRNA synthetase with relaxed tRNA specificity since it is able to aspartylate not only its cognate tRNA(Asp) but also tRNA(Asn). Reaction proceeds in two steps: L-aspartate is first activated by ATP to form Asp-AMP and then transferred to the acceptor end of tRNA(Asp/Asn). The sequence is that of Aspartate--tRNA(Asp/Asn) ligase from Saccharolobus solfataricus (strain ATCC 35092 / DSM 1617 / JCM 11322 / P2) (Sulfolobus solfataricus).